The sequence spans 382 residues: MSLKEKTQSLFANAFGYPATHTIQAPGRVNLIGEHTDYNDGFVLPCAIDYQTVISCAPRDDRKVRVMAADYENQLDEFSLDAPIVAHESYQWANYVRGVVKHLQLRNNNFGGVDMVISGNVPQGAGLSSSASLEVAVGTVLQQLYHLPLDGAQIALNGQEAENQFVGCNCGIMDQLISALGKKDHALLIDCRSLGTKAVSMPKGVAVVIINSNFKRTLVGSEYNTRREQCETGARFFQQPALRDVTIEEFNAVAHELDPIVAKRVRHILTENARTVEAASALEQGDLKRMGELMAESHASMRDDFEITVPQIDTLVEIVKAVIGDKGGVRMTGGGFGGCIVALIPEELVPAVQQAVAEQYEAKTGIKETFYVCKPSQGAGQC.

34–37 (EHTD) contacts substrate. 124 to 130 (GAGLSSS) is a binding site for ATP. 2 residues coordinate Mg(2+): S130 and E162. The Proton acceptor role is filled by D174. Y223 serves as a coordination point for substrate.

It belongs to the GHMP kinase family. GalK subfamily.

Its subcellular location is the cytoplasm. It carries out the reaction alpha-D-galactose + ATP = alpha-D-galactose 1-phosphate + ADP + H(+). Its pathway is carbohydrate metabolism; galactose metabolism. Catalyzes the transfer of the gamma-phosphate of ATP to D-galactose to form alpha-D-galactose-1-phosphate (Gal-1-P). The chain is Galactokinase from Escherichia coli (strain SMS-3-5 / SECEC).